Reading from the N-terminus, the 457-residue chain is Bifunctional protein GlmU (457 aa).

Residues 1–230 (MPLSLPLHIV…PREVEGVNDL (230 aa)) are pyrophosphorylase. UDP-N-acetyl-alpha-D-glucosamine-binding positions include 12–15 (LAAG), lysine 26, glutamine 78, 83–84 (GT), 105–107 (YGD), glycine 140, glutamate 155, asparagine 170, and asparagine 228. Residue aspartate 107 coordinates Mg(2+). Residue asparagine 228 participates in Mg(2+) binding. Residues 231–251 (WQLTQLERTWQIRAARALCLQ) are linker. The interval 252–457 (GARVADPARL…DGWQRPKKKT (206 aa)) is N-acetyltransferase. UDP-N-acetyl-alpha-D-glucosamine is bound by residues arginine 334 and lysine 352. Histidine 364 (proton acceptor) is an active-site residue. Positions 367 and 378 each coordinate UDP-N-acetyl-alpha-D-glucosamine. Residues alanine 381, 387 to 388 (NY), serine 406, alanine 424, and arginine 441 contribute to the acetyl-CoA site.

It in the N-terminal section; belongs to the N-acetylglucosamine-1-phosphate uridyltransferase family. The protein in the C-terminal section; belongs to the transferase hexapeptide repeat family. In terms of assembly, homotrimer. Requires Mg(2+) as cofactor.

It localises to the cytoplasm. The enzyme catalyses alpha-D-glucosamine 1-phosphate + acetyl-CoA = N-acetyl-alpha-D-glucosamine 1-phosphate + CoA + H(+). The catalysed reaction is N-acetyl-alpha-D-glucosamine 1-phosphate + UTP + H(+) = UDP-N-acetyl-alpha-D-glucosamine + diphosphate. Its pathway is nucleotide-sugar biosynthesis; UDP-N-acetyl-alpha-D-glucosamine biosynthesis; N-acetyl-alpha-D-glucosamine 1-phosphate from alpha-D-glucosamine 6-phosphate (route II): step 2/2. It functions in the pathway nucleotide-sugar biosynthesis; UDP-N-acetyl-alpha-D-glucosamine biosynthesis; UDP-N-acetyl-alpha-D-glucosamine from N-acetyl-alpha-D-glucosamine 1-phosphate: step 1/1. The protein operates within bacterial outer membrane biogenesis; LPS lipid A biosynthesis. In terms of biological role, catalyzes the last two sequential reactions in the de novo biosynthetic pathway for UDP-N-acetylglucosamine (UDP-GlcNAc). The C-terminal domain catalyzes the transfer of acetyl group from acetyl coenzyme A to glucosamine-1-phosphate (GlcN-1-P) to produce N-acetylglucosamine-1-phosphate (GlcNAc-1-P), which is converted into UDP-GlcNAc by the transfer of uridine 5-monophosphate (from uridine 5-triphosphate), a reaction catalyzed by the N-terminal domain. The chain is Bifunctional protein GlmU from Xylella fastidiosa (strain M12).